The following is a 496-amino-acid chain: Glutamyl-tRNA(Gln) amidotransferase subunit B, organellar chromatophore (496 aa).

The protein belongs to the GatB/GatE family. GatB subfamily. As to quaternary structure, subunit of the heterotrimeric GatCAB amidotransferase (AdT) complex, composed of A, B and C subunits.

The protein resides in the plastid. It is found in the organellar chromatophore. The catalysed reaction is L-glutamyl-tRNA(Gln) + L-glutamine + ATP + H2O = L-glutaminyl-tRNA(Gln) + L-glutamate + ADP + phosphate + H(+). Allows the formation of correctly charged Gln-tRNA(Gln) through the transamidation of misacylated Glu-tRNA(Gln). The reaction takes place in the presence of glutamine and ATP through an activated gamma-phospho-Glu-tRNA(Gln). The protein is Glutamyl-tRNA(Gln) amidotransferase subunit B, organellar chromatophore of Paulinella chromatophora.